The following is a 198-amino-acid chain: Translation initiation factor IF-3 (198 aa).

Positions 168–198 are disordered; it reads SLAPKKAGSPKKAETDTAKKENPKKAVETKE. Over residues 178 to 198 the composition is skewed to basic and acidic residues; sequence KKAETDTAKKENPKKAVETKE.

The protein belongs to the IF-3 family. As to quaternary structure, monomer.

Its subcellular location is the cytoplasm. Its function is as follows. IF-3 binds to the 30S ribosomal subunit and shifts the equilibrium between 70S ribosomes and their 50S and 30S subunits in favor of the free subunits, thus enhancing the availability of 30S subunits on which protein synthesis initiation begins. The polypeptide is Translation initiation factor IF-3 (Phocaeicola vulgatus (strain ATCC 8482 / DSM 1447 / JCM 5826 / CCUG 4940 / NBRC 14291 / NCTC 11154) (Bacteroides vulgatus)).